Here is a 218-residue protein sequence, read N- to C-terminus: GTP cyclohydrolase 1 (218 aa).

Positions 109, 112, and 180 each coordinate Zn(2+).

Belongs to the GTP cyclohydrolase I family. As to quaternary structure, toroid-shaped homodecamer, composed of two pentamers of five dimers.

The catalysed reaction is GTP + H2O = 7,8-dihydroneopterin 3'-triphosphate + formate + H(+). It functions in the pathway cofactor biosynthesis; 7,8-dihydroneopterin triphosphate biosynthesis; 7,8-dihydroneopterin triphosphate from GTP: step 1/1. This Mannheimia succiniciproducens (strain KCTC 0769BP / MBEL55E) protein is GTP cyclohydrolase 1.